The sequence spans 1969 residues: Myosin-3 (1969 aa).

The 50-residue stretch at 33–82 (DSKKNCWIPDPEDGFVAAEIQSTTGDQVTVVTVKGNQITVKKDQCQEMNP) folds into the Myosin N-terminal SH3-like domain. Residues 86–791 (DKTEDMANLT…VLAKLEDLRD (706 aa)) enclose the Myosin motor domain. N6,N6,N6-trimethyllysine is present on Lys130. 179 to 186 (GESGAGKT) contacts ATP. Actin-binding stretches follow at residues 667 to 689 (LNNL…IPNE) and 770 to 784 (KIGE…GVLA). The IQ domain occupies 794–823 (LSRIVTMFQSRIRSYLAKAEVRRRYEQQTG). A coiled-coil region spans residues 853-1941 (LKAGKEQEAM…KMRNKIRASA (1089 aa)). Disordered stretches follow at residues 943 to 967 (QERH…KKHV), 993 to 1029 (DEMA…EEDK), and 1134 to 1153 (ELES…NELQ). Composition is skewed to basic and acidic residues over residues 1001–1029 (SVAK…EEDK) and 1137–1153 (SERN…NELQ).

This sequence belongs to the TRAFAC class myosin-kinesin ATPase superfamily. Myosin family. Muscle myosin is a hexameric protein that consists of 2 heavy chain subunits (MHC), 2 alkali light chain subunits (MLC) and 2 regulatory light chain subunits (MLC-2).

It is found in the cytoplasm. It localises to the myofibril. Its subcellular location is the sarcomere. The protein resides in the a band. In terms of biological role, essential for muscle contraction. Involved in ovulation likely by regulating the contraction of gonadal myoepithelial sheath cells. This chain is Myosin-3, found in Caenorhabditis briggsae.